The chain runs to 363 residues: Trans-2,3-enoyl-CoA reductase-like (363 aa).

A Phosphoserine modification is found at serine 37. A run of 4 helical transmembrane segments spans residues 143-163, 216-235, 250-270, and 311-331; these read WTTVFLAEYTGPLLIYLLFYL, NLLKSCAFYWGFTSWIAYYI, VAISAINFLICEAGNHFINVV, and ISFTIMTQTLPVGIFTLLMSI.

It belongs to the steroid 5-alpha reductase family.

The protein localises to the membrane. The protein resides in the endoplasmic reticulum. The polypeptide is Trans-2,3-enoyl-CoA reductase-like (TECRL) (Bos taurus (Bovine)).